The primary structure comprises 1134 residues: Envelopment polyprotein (1134 aa).

The first 18 residues, 1-18 (MGIWKWLVMASLVWPVLT), serve as a signal peptide directing secretion. The Lumenal segment spans residues 19-487 (LRNVYDMKIE…GFHGWATAAL (469 aa)). 8 disulfide bridges follow: Cys-29-Cys-151, Cys-63-Cys-157, Cys-109-Cys-128, Cys-133-Cys-138, Cys-175-Cys-185, Cys-210-Cys-247, Cys-234-Cys-351, and Cys-380-Cys-389. Asn-134 carries N-linked (GlcNAc...) asparagine; by host glycosylation. N-linked (GlcNAc...) asparagine; by host glycosylation is found at Asn-235 and Asn-347. Asn-399 carries N-linked (GlcNAc...) asparagine; by host glycosylation. 2 cysteine pairs are disulfide-bonded: Cys-405–Cys-424 and Cys-452–Cys-475. The helical transmembrane segment at 488–508 (LVTFCFGWVLIPAVTFIILAI) threads the bilayer. The Cytoplasmic portion of the chain corresponds to 509–627 (LKFIANIFHT…LNLFRYKSRC (119 aa)). The interval 516 to 533 (FHTSNQENRLKSVLRKIK) is binding to the ribonucleoprotein. 2 consecutive CCHC-type zinc fingers follow at residues 545–565 (CDVC…GVSC) and 570–591 (CPYC…YKVC). Binding to the ribonucleoprotein regions lie at residues 588–605 (YKVC…KKTV), 592–603 (QVTHRFRDDLKK), and 611–625 (TPGC…RYKS). The 24-residue stretch at 611–634 (TPGCYRTLNLFRYKSRCYIFTMWI) folds into the ITAM domain. The YxxL motif lies at 615–618 (YRTL). The helical transmembrane segment at 628–648 (YIFTMWIFLLVLESILWAASA) threads the bilayer. At 649–1104 (SETPLTPVWN…EWISGIFSGN (456 aa)) the chain is on the lumenal side. Intrachain disulfides connect Cys-734–Cys-769, Cys-738–Cys-776, Cys-750–Cys-884, Cys-764–Cys-895, Cys-779–Cys-903, Cys-805–Cys-814, and Cys-822–Cys-831. The segment at 756–776 (YQYETSWGCNPSDCPGCGTGC) is fusion loop. Residue Asn-927 is glycosylated (N-linked (GlcNAc...) asparagine; by host). 5 disulfide bridges follow: Cys-969/Cys-999, Cys-992/Cys-1044, Cys-1009/Cys-1014, Cys-1045/Cys-1050, and Cys-1084/Cys-1088. Residues 1105–1125 (WIVLIVLCVFLLFSLVLLSIL) form a helical membrane-spanning segment. The interval 1121 to 1134 (LLSILCPVRKHKKS) is binding to the ribonucleoprotein. Residues 1126 to 1134 (CPVRKHKKS) lie on the Cytoplasmic side of the membrane.

Belongs to the hantavirus envelope glycoprotein family. In terms of assembly, homodimer. Homotetramer; forms heterotetrameric Gn-Gc spikes in the pre-fusion conformation. Interacts (via C-terminus) with the nucleoprotein. Interacts with host TUFM; this interaction contributes to the virus-induced degradation of mitochondria by autophagy, which leads to degradation of host MAVS and inhibition of type I interferon (IFN) responses. Interacts with host MAP1LC3B; this interaction contributes to the virus-induced degradation of mitochondria by autophagy, which leads to degradation of host MAVS and inhibition of type I interferon (IFN) responses. As to quaternary structure, homodimer. Homotetramer; forms heterotetrameric Gn-Gc spikes in the pre-fusion conformation. Homotrimer; forms homotrimer in the post-fusion conformation at acidic pH. Interacts (via C-terminus) with the nucleoprotein. In terms of processing, envelope polyprotein precursor is quickly cleaved in vivo just after synthesis, presumably by host signal peptidase.

It localises to the virion membrane. Its subcellular location is the host cell surface. It is found in the host Golgi apparatus membrane. The protein resides in the host endoplasmic reticulum membrane. The protein localises to the host mitochondrion. In terms of biological role, forms homotetramers with glycoprotein C at the surface of the virion. Attaches the virion to host cell receptors including integrin ITGAV/ITGB3. This attachment induces virion internalization predominantly through clathrin-dependent endocytosis. May also bind to host C1QBP for virus entry into the host cell. Mediates the assembly and budding of infectious virus particles through its interaction with the nucleocapsid protein and the viral genome. May dysregulate normal immune and endothelial cell responses through an ITAM motif. Translocates to mitochondria, binds to host TUFM and recruits MAP1LC3B. These interactions induce mitochondrial autophagy and therefore destruction of host MAVS leading to inhibition of type I interferon (IFN) responses. Concomitant breakdown of glycoprotein N is apparently prevented by the nucleoprotein that may inhibit Gn-stimulated autophagosome-lysosome fusion. Interacts with the viral genomic RNA. Its function is as follows. Forms homotetramers with glycoprotein N at the surface of the virion. Attaches the virion to host cell receptors including integrin ITGAV/ITGB3. This attachment induces virion internalization predominantly through clathrin-dependent endocytosis. May also bind to host C1QBP for virus entry into the host cell. Class II fusion protein that promotes fusion of viral membrane with host endosomal membrane after endocytosis of the virion. The chain is Envelopment polyprotein (GP) from Apodemus agrarius (Eurasian field mouse).